The primary structure comprises 429 residues: Glutamate-1-semialdehyde 2,1-aminomutase (429 aa).

Lys-267 bears the N6-(pyridoxal phosphate)lysine mark.

The protein belongs to the class-III pyridoxal-phosphate-dependent aminotransferase family. HemL subfamily. In terms of assembly, homodimer. The cofactor is pyridoxal 5'-phosphate.

Its subcellular location is the cytoplasm. It catalyses the reaction (S)-4-amino-5-oxopentanoate = 5-aminolevulinate. The protein operates within porphyrin-containing compound metabolism; protoporphyrin-IX biosynthesis; 5-aminolevulinate from L-glutamyl-tRNA(Glu): step 2/2. In Xanthomonas euvesicatoria pv. vesicatoria (strain 85-10) (Xanthomonas campestris pv. vesicatoria), this protein is Glutamate-1-semialdehyde 2,1-aminomutase.